Here is a 701-residue protein sequence, read N- to C-terminus: Elongation factor G 2 (701 aa).

One can recognise a tr-type G domain in the interval 8-290; that stretch reads NRYRNIGIVA…AVIEFLPAPA (283 aa). Residues 17–24, 88–92, and 142–145 each bind GTP; these read AHVDAGKT, DTPGH, and NKMD.

The protein belongs to the TRAFAC class translation factor GTPase superfamily. Classic translation factor GTPase family. EF-G/EF-2 subfamily.

It localises to the cytoplasm. Its function is as follows. Catalyzes the GTP-dependent ribosomal translocation step during translation elongation. During this step, the ribosome changes from the pre-translocational (PRE) to the post-translocational (POST) state as the newly formed A-site-bound peptidyl-tRNA and P-site-bound deacylated tRNA move to the P and E sites, respectively. Catalyzes the coordinated movement of the two tRNA molecules, the mRNA and conformational changes in the ribosome. The chain is Elongation factor G 2 from Pseudoalteromonas atlantica (strain T6c / ATCC BAA-1087).